The following is a 78-amino-acid chain: Large ribosomal subunit protein bL31 (78 aa).

The protein belongs to the bacterial ribosomal protein bL31 family. Type A subfamily. Part of the 50S ribosomal subunit.

Its function is as follows. Binds the 23S rRNA. This chain is Large ribosomal subunit protein bL31, found in Rickettsia prowazekii (strain Madrid E).